The primary structure comprises 146 residues: MGRSIFSFFTKKKKMAMARSISYITSTQLLPLHRRPNIAIIDVRDEERNYDGHIAGSLHYASGSFDDKISHLVQNVKDKDTLVFHCALSQVRGPTCARRLVNYLDEKKEDTGIKNIMILERGFNGWEASGKPVCRCAEVPCKGDCA.

The 102-residue stretch at 34–135 (RRPNIAIIDV…WEASGKPVCR (102 aa)) folds into the Rhodanese domain. 45–48 (DEER) contacts substrate. H53 is a Zn(2+) binding site. A substrate-binding site is contributed by 68 to 71 (KISH). The Cysteine persulfide intermediate role is filled by C86. 90 to 92 (QVR) contributes to the substrate binding site. 3 residues coordinate Zn(2+): C134, C136, and C141.

Belongs to the MPI phosphatase family. As to expression, expressed in roots and at lower levels in shoots (at protein level). Expressed in leaves, stems and flowers.

The protein resides in the nucleus. The catalysed reaction is O-phospho-L-tyrosyl-[protein] + H2O = L-tyrosyl-[protein] + phosphate. It catalyses the reaction [glutaredoxin]-dithiol + arsenate + glutathione + H(+) = glutathionyl-S-S-[glutaredoxin] + arsenite + H2O. Inhibited by NSC95397. In terms of biological role, tyrosine protein phosphatase that dephosphorylates CDK complex and activate its kinase activity in vitro. Functionally, arsenate reductase that plays a major role in the reduction of arsenate to arsenite and arsenic retention in roots. Has an in vitro and in vivo arsenate reductase activity. Plays no role in arsenic metabolism. This Arabidopsis thaliana (Mouse-ear cress) protein is Dual specificity phosphatase Cdc25.